Here is a 500-residue protein sequence, read N- to C-terminus: NAD(P)H-quinone oxidoreductase chain 4, chloroplastic (500 aa).

Transmembrane regions (helical) follow at residues 3–23, 37–57, 87–107, 113–130, 134–154, 167–187, 208–228, 242–262, 272–292, 305–325, 330–350, 386–406, 416–436, and 462–482; these read FFPW…LIFF, ICIC…HFQL, IGPI…AWPI, LFHF…GSFS, LLLF…LLSM, FILY…GMGL, ALEI…SPII, HYST…YGLV, AHSI…IYAA, IAYS…SITD, GAVL…FLAG, LALP…GIIT, ILIT…SLSM, and LFVS…PDFV.

It belongs to the complex I subunit 4 family.

It is found in the plastid. Its subcellular location is the chloroplast thylakoid membrane. It catalyses the reaction a plastoquinone + NADH + (n+1) H(+)(in) = a plastoquinol + NAD(+) + n H(+)(out). The enzyme catalyses a plastoquinone + NADPH + (n+1) H(+)(in) = a plastoquinol + NADP(+) + n H(+)(out). This chain is NAD(P)H-quinone oxidoreductase chain 4, chloroplastic, found in Platanus occidentalis (Sycamore).